The chain runs to 200 residues: Pyrrolidone-carboxylate peptidase (200 aa).

Catalysis depends on residues glutamate 78, cysteine 141, and histidine 165.

The protein belongs to the peptidase C15 family. As to quaternary structure, homotetramer.

It localises to the cytoplasm. The catalysed reaction is Release of an N-terminal pyroglutamyl group from a polypeptide, the second amino acid generally not being Pro.. Removes 5-oxoproline from various penultimate amino acid residues except L-proline. This chain is Pyrrolidone-carboxylate peptidase, found in Thermococcus onnurineus (strain NA1).